We begin with the raw amino-acid sequence, 118 residues long: Large ribosomal subunit protein uL22 (118 aa).

It belongs to the universal ribosomal protein uL22 family. As to quaternary structure, part of the 50S ribosomal subunit.

Its function is as follows. This protein binds specifically to 23S rRNA; its binding is stimulated by other ribosomal proteins, e.g. L4, L17, and L20. It is important during the early stages of 50S assembly. It makes multiple contacts with different domains of the 23S rRNA in the assembled 50S subunit and ribosome. Functionally, the globular domain of the protein is located near the polypeptide exit tunnel on the outside of the subunit, while an extended beta-hairpin is found that lines the wall of the exit tunnel in the center of the 70S ribosome. In Pediococcus pentosaceus (strain ATCC 25745 / CCUG 21536 / LMG 10740 / 183-1w), this protein is Large ribosomal subunit protein uL22.